Consider the following 230-residue polypeptide: Modulator of macroautophagy TMEM150B-A (230 aa).

Met-1 is a topological domain (cytoplasmic). A helical transmembrane segment spans residues 2–22 (WAWALLPICLTIWATAGIWIV). Residues 23-50 (YGMSVSNGSVNLSDGFPYISLCGTDPPQ) lie on the Extracellular side of the membrane. N-linked (GlcNAc...) asparagine glycosylation is found at Asn-29 and Asn-33. The chain crosses the membrane as a helical span at residues 51-71 (SCVFGQVLNVGAMLGVWISAI). The Cytoplasmic segment spans residues 72–83 (RFQQIRDYNCHS). The chain crosses the membrane as a helical span at residues 84-104 (VLNSVSLAMGILCALGTSIVG). The Extracellular portion of the chain corresponds to 105-115 (NFQQSNQLETH). Residues 116–136 (LAGAFLAFVIGNIYFWMQTAL) traverse the membrane as a helical segment. Over 137–150 (TYMVKPTHGGCYIG) the chain is Cytoplasmic. A helical transmembrane segment spans residues 151 to 171 (PIRFCLSVACTALIVLMAVFL). The Extracellular segment spans residues 172–183 (KMNMKSISAICE). A helical transmembrane segment spans residues 184–204 (WIVAMILFLLYGLFAVDFWHL). The Cytoplasmic portion of the chain corresponds to 205-230 (DGHYFHVKKRTVIPNEMQVSTVTLSI).

It belongs to the DRAM/TMEM150 family.

The protein resides in the cell membrane. Its subcellular location is the endosome membrane. The protein localises to the cytoplasmic vesicle. It localises to the autophagosome membrane. Functionally, modulator of macroautophagy that causes accumulation of autophagosomes under basal conditions and enhances autophagic flux. Represses cell death and promotes long-term clonogenic survival of cells grown in the absence of glucose in a macroautophagy-independent manner. May have some role in extracellular matrix engulfment or growth factor receptor recycling, both of which can modulate cell survival. The chain is Modulator of macroautophagy TMEM150B-A from Xenopus laevis (African clawed frog).